The sequence spans 393 residues: Argininosuccinate synthase (393 aa).

ATP is bound by residues 7–15 (AYSGGLDTS) and A34. Positions 85 and 90 each coordinate L-citrulline. Position 115 (G115) interacts with ATP. The L-aspartate site is built by T117, N121, and D122. Residue N121 coordinates L-citrulline. L-citrulline is bound by residues R125, S176, S185, E261, and Y273.

The protein belongs to the argininosuccinate synthase family. Type 1 subfamily. Homotetramer.

It is found in the cytoplasm. It carries out the reaction L-citrulline + L-aspartate + ATP = 2-(N(omega)-L-arginino)succinate + AMP + diphosphate + H(+). It participates in amino-acid biosynthesis; L-arginine biosynthesis; L-arginine from L-ornithine and carbamoyl phosphate: step 2/3. This chain is Argininosuccinate synthase, found in Ehrlichia canis (strain Jake).